The following is a 96-amino-acid chain: MVEFSHTKKIGSAGRFGPRYGRKIRVRLRDVEIKQNKEYKCPVCAFPKLKRAGTSIWVCDKCGAKIAGGAYTPETGAGKVVTKAIRRVIESKSREI.

A C4-type zinc finger spans residues 41–62; sequence CPVCAFPKLKRAGTSIWVCDKC.

It belongs to the eukaryotic ribosomal protein eL43 family. It depends on Zn(2+) as a cofactor.

This Methanococcus vannielii (strain ATCC 35089 / DSM 1224 / JCM 13029 / OCM 148 / SB) protein is Large ribosomal subunit protein eL43.